The following is a 128-amino-acid chain: Large ribosomal subunit protein bL12 (128 aa).

Belongs to the bacterial ribosomal protein bL12 family. As to quaternary structure, homodimer. Part of the ribosomal stalk of the 50S ribosomal subunit. Forms a multimeric L10(L12)X complex, where L10 forms an elongated spine to which 2 to 4 L12 dimers bind in a sequential fashion. Binds GTP-bound translation factors.

Forms part of the ribosomal stalk which helps the ribosome interact with GTP-bound translation factors. Is thus essential for accurate translation. In Synechococcus sp. (strain CC9311), this protein is Large ribosomal subunit protein bL12.